A 92-amino-acid chain; its full sequence is Kappa-scoloptoxin(15)-Ssd2a (92 aa).

The first 20 residues, 1–20, serve as a signal peptide directing secretion; that stretch reads MKMVYLGLFLIITSCVISSG.

Contains 3 disulfide bonds. As to expression, expressed by the venom gland.

Its subcellular location is the secreted. In terms of biological role, inhibits voltage-gated potassium channels (Kv) (IC(50)=about 10 nM), when tested on DRG neurons. The protein is Kappa-scoloptoxin(15)-Ssd2a of Scolopendra dehaani (Thai centipede).